A 212-amino-acid chain; its full sequence is N-(5'-phosphoribosyl)anthranilate isomerase (212 aa).

This sequence belongs to the TrpF family.

It catalyses the reaction N-(5-phospho-beta-D-ribosyl)anthranilate = 1-(2-carboxyphenylamino)-1-deoxy-D-ribulose 5-phosphate. Its pathway is amino-acid biosynthesis; L-tryptophan biosynthesis; L-tryptophan from chorismate: step 3/5. The protein is N-(5'-phosphoribosyl)anthranilate isomerase of Roseiflexus castenholzii (strain DSM 13941 / HLO8).